Here is a 339-residue protein sequence, read N- to C-terminus: Endospore coat-associated protein YutH (339 aa).

The protein belongs to the CotS family.

It is found in the forespore outer membrane. The protein resides in the spore coat. Its function is as follows. Involved in sporulation. This Bacillus subtilis (strain 168) protein is Endospore coat-associated protein YutH (yutH).